Consider the following 443-residue polypeptide: Exodeoxyribonuclease 7 large subunit (443 aa).

Belongs to the XseA family. As to quaternary structure, heterooligomer composed of large and small subunits.

It is found in the cytoplasm. The catalysed reaction is Exonucleolytic cleavage in either 5'- to 3'- or 3'- to 5'-direction to yield nucleoside 5'-phosphates.. Its function is as follows. Bidirectionally degrades single-stranded DNA into large acid-insoluble oligonucleotides, which are then degraded further into small acid-soluble oligonucleotides. This Vibrio parahaemolyticus serotype O3:K6 (strain RIMD 2210633) protein is Exodeoxyribonuclease 7 large subunit.